A 438-amino-acid polypeptide reads, in one-letter code: 23S rRNA (uracil(1939)-C(5))-methyltransferase RlmD (438 aa).

A TRAM domain is found at 10–69 (KASVNTKHQSVDVVRLDHNGAGIAFVDKKPVFIEGALPGEKAIIQFIEQKKQFSRAKLIK). [4Fe-4S] cluster contacts are provided by cysteine 82, cysteine 88, cysteine 91, and cysteine 169. 6 residues coordinate S-adenosyl-L-methionine: glutamine 272, phenylalanine 301, asparagine 306, glutamate 322, asparagine 349, and aspartate 370. Cysteine 396 serves as the catalytic Nucleophile.

Belongs to the class I-like SAM-binding methyltransferase superfamily. RNA M5U methyltransferase family. RlmD subfamily.

It catalyses the reaction uridine(1939) in 23S rRNA + S-adenosyl-L-methionine = 5-methyluridine(1939) in 23S rRNA + S-adenosyl-L-homocysteine + H(+). In terms of biological role, catalyzes the formation of 5-methyl-uridine at position 1939 (m5U1939) in 23S rRNA. The protein is 23S rRNA (uracil(1939)-C(5))-methyltransferase RlmD of Aliivibrio fischeri (strain ATCC 700601 / ES114) (Vibrio fischeri).